A 102-amino-acid polypeptide reads, in one-letter code: NADH-quinone oxidoreductase subunit K (102 aa).

Helical transmembrane passes span 6–26 (MHHGLLLAAILFALGMIGILV), 30–50 (LIFILMSIEIMLNAAGLAFVV), and 64–84 (FIFILSVAAAEVSVGLALLLL).

Belongs to the complex I subunit 4L family. As to quaternary structure, NDH-1 is composed of 14 different subunits. Subunits NuoA, H, J, K, L, M, N constitute the membrane sector of the complex.

It is found in the cell inner membrane. The enzyme catalyses a quinone + NADH + 5 H(+)(in) = a quinol + NAD(+) + 4 H(+)(out). Its function is as follows. NDH-1 shuttles electrons from NADH, via FMN and iron-sulfur (Fe-S) centers, to quinones in the respiratory chain. The immediate electron acceptor for the enzyme in this species is believed to be ubiquinone. Couples the redox reaction to proton translocation (for every two electrons transferred, four hydrogen ions are translocated across the cytoplasmic membrane), and thus conserves the redox energy in a proton gradient. This chain is NADH-quinone oxidoreductase subunit K, found in Nitrosospira multiformis (strain ATCC 25196 / NCIMB 11849 / C 71).